The primary structure comprises 393 residues: NAD(P)H-quinone oxidoreductase subunit H, chloroplastic (393 aa).

The protein belongs to the complex I 49 kDa subunit family. As to quaternary structure, NDH is composed of at least 16 different subunits, 5 of which are encoded in the nucleus.

It localises to the plastid. Its subcellular location is the chloroplast thylakoid membrane. It carries out the reaction a plastoquinone + NADH + (n+1) H(+)(in) = a plastoquinol + NAD(+) + n H(+)(out). The catalysed reaction is a plastoquinone + NADPH + (n+1) H(+)(in) = a plastoquinol + NADP(+) + n H(+)(out). Its function is as follows. NDH shuttles electrons from NAD(P)H:plastoquinone, via FMN and iron-sulfur (Fe-S) centers, to quinones in the photosynthetic chain and possibly in a chloroplast respiratory chain. The immediate electron acceptor for the enzyme in this species is believed to be plastoquinone. Couples the redox reaction to proton translocation, and thus conserves the redox energy in a proton gradient. This Gossypium barbadense (Sea Island cotton) protein is NAD(P)H-quinone oxidoreductase subunit H, chloroplastic.